We begin with the raw amino-acid sequence, 424 residues long: Tyrosine--tRNA ligase (424 aa).

Tyr-37 serves as a coordination point for L-tyrosine. The 'HIGH' region signature appears at 42–51 (PTADSLHLGH). Residues Tyr-175 and Gln-179 each coordinate L-tyrosine. Positions 235 to 239 (KFGKT) match the 'KMSKS' region motif. ATP is bound at residue Lys-238. The 58-residue stretch at 357 to 414 (ADLMQALVDAELQPSRGQARKTIASNAVTINGEKQSDPEYIFNDEDRLFGRYTLLRRG) folds into the S4 RNA-binding domain.

This sequence belongs to the class-I aminoacyl-tRNA synthetase family. TyrS type 1 subfamily. As to quaternary structure, homodimer.

The protein resides in the cytoplasm. The catalysed reaction is tRNA(Tyr) + L-tyrosine + ATP = L-tyrosyl-tRNA(Tyr) + AMP + diphosphate + H(+). Its function is as follows. Catalyzes the attachment of tyrosine to tRNA(Tyr) in a two-step reaction: tyrosine is first activated by ATP to form Tyr-AMP and then transferred to the acceptor end of tRNA(Tyr). This is Tyrosine--tRNA ligase from Salmonella enteritidis PT4 (strain P125109).